A 722-amino-acid polypeptide reads, in one-letter code: Polyribonucleotide nucleotidyltransferase (722 aa).

Residues Asp498 and Asp504 each coordinate Mg(2+). Residues 565 to 624 form the KH domain; it reads PQFHTMKIDPDKIRDIIGKGGATIRSITEETGASIDIDDNGTIKIYADDGDGMQAAIARI. Residues 634–702 form the S1 motif domain; the sequence is GAVYQGKVVR…QRGRIKLSIK (69 aa).

It belongs to the polyribonucleotide nucleotidyltransferase family. In terms of assembly, component of the RNA degradosome, which is a multiprotein complex involved in RNA processing and mRNA degradation. Mg(2+) is required as a cofactor.

It is found in the cytoplasm. The catalysed reaction is RNA(n+1) + phosphate = RNA(n) + a ribonucleoside 5'-diphosphate. In terms of biological role, involved in mRNA degradation. Catalyzes the phosphorolysis of single-stranded polyribonucleotides processively in the 3'- to 5'-direction. The protein is Polyribonucleotide nucleotidyltransferase of Saccharophagus degradans (strain 2-40 / ATCC 43961 / DSM 17024).